Here is a 267-residue protein sequence, read N- to C-terminus: Mediator of RNA polymerase II transcription subunit 18 (267 aa).

It belongs to the Mediator complex subunit 18 family. In terms of assembly, component of the Mediator complex.

It localises to the nucleus. Functionally, component of the Mediator complex, a coactivator involved in the regulated transcription of nearly all RNA polymerase II-dependent genes. Mediator functions as a bridge to convey information from gene-specific regulatory proteins to the basal RNA polymerase II transcription machinery. Mediator is recruited to promoters by direct interactions with regulatory proteins and serves as a scaffold for the assembly of a functional preinitiation complex with RNA polymerase II and the general transcription factors. The protein is Mediator of RNA polymerase II transcription subunit 18 (SRB5) of Coccidioides immitis (strain RS) (Valley fever fungus).